We begin with the raw amino-acid sequence, 130 residues long: UPF0251 protein MmarC5_0986 (130 aa).

This sequence belongs to the UPF0251 family.

The polypeptide is UPF0251 protein MmarC5_0986 (Methanococcus maripaludis (strain C5 / ATCC BAA-1333)).